Reading from the N-terminus, the 487-residue chain is 2-aminomuconic semialdehyde dehydrogenase (487 aa).

231–236 (GSTATA) provides a ligand contact to NAD(+). Catalysis depends on glutamate 253, which acts as the Proton acceptor. Cysteine 287 functions as the Nucleophile in the catalytic mechanism.

It belongs to the aldehyde dehydrogenase family.

It localises to the cytoplasm. It carries out the reaction 2-aminomuconate 6-semialdehyde + NAD(+) + H2O = (2Z,4E)-2-aminomuconate + NADH + 2 H(+). It participates in amino-acid degradation; L-kynurenine degradation. Functionally, catalyzes the NAD-dependent oxidation of 2-aminomuconic semialdehyde of the kynurenine metabolic pathway in L-tryptophan degradation. The protein is 2-aminomuconic semialdehyde dehydrogenase (aldh8a1) of Danio rerio (Zebrafish).